Here is a 56-residue protein sequence, read N- to C-terminus: Small ribosomal subunit protein bS21 (56 aa).

This sequence belongs to the bacterial ribosomal protein bS21 family.

The protein is Small ribosomal subunit protein bS21 of Dictyoglomus thermophilum (strain ATCC 35947 / DSM 3960 / H-6-12).